The following is a 465-amino-acid chain: Putative subtilisin-like proteinase 1 (465 aa).

The N-terminal stretch at 1–17 (MILAIISLSVVICREVS) is a signal peptide. The Inhibitor I9 domain occupies 19 to 90 (YIVMFDQDPS…VKMVVKDSPV (72 aa)). A Peptidase S8 domain is found at 115–447 (PWGLARVGGS…PSLFNANKKK (333 aa)). Catalysis depends on charge relay system residues Asp148 and His180. Cys329 and Cys360 are oxidised to a cystine. Ser386 (charge relay system) is an active-site residue.

It belongs to the peptidase S8 family.

The protein resides in the secreted. Its subcellular location is the extracellular space. Its function is as follows. May be involved in the degradation of proteins for nutrient acquisition or possess a regulatory function by proteolytic activation of proproteins. The sequence is that of Putative subtilisin-like proteinase 1 (SPL1) from Encephalitozoon cuniculi (strain GB-M1) (Microsporidian parasite).